The primary structure comprises 94 residues: Small ribosomal subunit protein bS20 (94 aa).

It belongs to the bacterial ribosomal protein bS20 family.

Its function is as follows. Binds directly to 16S ribosomal RNA. The sequence is that of Small ribosomal subunit protein bS20 from Acaryochloris marina (strain MBIC 11017).